We begin with the raw amino-acid sequence, 119 residues long: Large ribosomal subunit protein bL20c (119 aa).

Belongs to the bacterial ribosomal protein bL20 family.

The protein resides in the plastid. It is found in the chloroplast. Functionally, binds directly to 23S ribosomal RNA and is necessary for the in vitro assembly process of the 50S ribosomal subunit. It is not involved in the protein synthesizing functions of that subunit. The protein is Large ribosomal subunit protein bL20c of Amborella trichopoda.